A 121-amino-acid polypeptide reads, in one-letter code: Colipase-like protein 1 (121 aa).

The N-terminal stretch at 1-23 is a signal peptide; it reads MMLPQWLLLLFLLFFFLFLLTRG. 5 disulfides stabilise this stretch: cysteine 39–cysteine 50, cysteine 45–cysteine 61, cysteine 49–cysteine 83, cysteine 71–cysteine 91, and cysteine 85–cysteine 107.

Belongs to the colipase family. In terms of tissue distribution, exclusively expressed in epididymis, in the corpus region.

The protein resides in the secreted. The protein is Colipase-like protein 1 (CLPSL1) of Homo sapiens (Human).